We begin with the raw amino-acid sequence, 341 residues long: MKQVFLWLIFVLAFHKLLAEKIGDIASVVGVRDNQLIGYGLVIGLNGTGDKSGSKFTMQSISNMLESVNVKISADDIKSKNVAAVMITASLPPFARQGDKIDIHISSIGDAKSIQGGTLVMTPLNAVDGNIYALAQGSITSGNSNNLLSANIINGATIEREVSYDLFHKNAMVLSLKNPNFKNAIQVQNALNKVFNKRIAMALDPKTIQITRPERFSMVEFLAIVQEIPINYSAKNKIIVDEKSGTIVSGVDIIVHPIVVTSQDITLKITKEPLNDSKNVQDLDSMSLDTAHNTLSSNGKNITIAGVMKALQKIGVSAKGIVSILQALKKSGAISAEMEIL.

Positions 1–19 (MKQVFLWLIFVLAFHKLLA) are cleaved as a signal peptide.

This sequence belongs to the FlgI family. The basal body constitutes a major portion of the flagellar organelle and consists of four rings (L,P,S, and M) mounted on a central rod.

Its subcellular location is the periplasm. The protein resides in the bacterial flagellum basal body. Functionally, assembles around the rod to form the L-ring and probably protects the motor/basal body from shearing forces during rotation. This is Flagellar P-ring protein from Helicobacter acinonychis (strain Sheeba).